We begin with the raw amino-acid sequence, 456 residues long: Adenylosuccinate lyase (456 aa).

Residues 15-16 (RY) and 90-92 (NHD) contribute to the N(6)-(1,2-dicarboxyethyl)-AMP site. Lys-94 is subject to N6-acetyllysine. 122-123 (TS) provides a ligand contact to N(6)-(1,2-dicarboxyethyl)-AMP. The Proton donor/acceptor role is filled by His-171. Gln-247 contacts N(6)-(1,2-dicarboxyethyl)-AMP. Ser-295 serves as the catalytic Proton donor/acceptor. Residues Ser-296, 301–303 (KVN), Asn-309, Arg-335, and 340–344 (STVLR) contribute to the N(6)-(1,2-dicarboxyethyl)-AMP site. Lys-366 bears the N6-acetyllysine mark.

It belongs to the lyase 1 family. Adenylosuccinate lyase subfamily. As to quaternary structure, homotetramer. Residues from neighboring subunits contribute catalytic and substrate-binding residues to each active site.

It catalyses the reaction N(6)-(1,2-dicarboxyethyl)-AMP = fumarate + AMP. The enzyme catalyses (2S)-2-[5-amino-1-(5-phospho-beta-D-ribosyl)imidazole-4-carboxamido]succinate = 5-amino-1-(5-phospho-beta-D-ribosyl)imidazole-4-carboxamide + fumarate. It functions in the pathway purine metabolism; AMP biosynthesis via de novo pathway; AMP from IMP: step 2/2. The protein operates within purine metabolism; IMP biosynthesis via de novo pathway; 5-amino-1-(5-phospho-D-ribosyl)imidazole-4-carboxamide from 5-amino-1-(5-phospho-D-ribosyl)imidazole-4-carboxylate: step 2/2. In terms of biological role, catalyzes two reactions in de novo purine nucleotide biosynthesis. Catalyzes the breakdown of 5-aminoimidazole- (N-succinylocarboxamide) ribotide (SAICAR or 2-[5-amino-1-(5-phospho-beta-D-ribosyl)imidazole-4-carboxamido]succinate) to 5-aminoimidazole-4-carboxamide ribotide (AICAR or 5-amino-1-(5-phospho-beta-D-ribosyl)imidazole-4-carboxamide) and fumarate, and of adenylosuccinate (ADS or N(6)-(1,2-dicarboxyethyl)-AMP) to adenosine monophosphate (AMP) and fumarate. In Escherichia coli O6:H1 (strain CFT073 / ATCC 700928 / UPEC), this protein is Adenylosuccinate lyase (purB).